Consider the following 126-residue polypeptide: Histone H2B 8 (126 aa).

The span at 1–12 (MPEPAKSAPAPK) shows a compositional bias: low complexity. The disordered stretch occupies residues 1–35 (MPEPAKSAPAPKKGSKKAVTKTQKKGDKKRRKTRK). Lys-6 and Lys-13 each carry N6-acetyllysine. Over residues 13–34 (KGSKKAVTKTQKKGDKKRRKTR) the composition is skewed to basic residues. Residue Ser-15 is modified to Phosphoserine. N6-acetyllysine occurs at positions 16 and 21. A glycan (O-linked (GlcNAc) serine) is linked at Ser-113. Residue Lys-121 forms a Glycyl lysine isopeptide (Lys-Gly) (interchain with G-Cter in ubiquitin) linkage.

Belongs to the histone H2B family. The nucleosome is a histone octamer containing two molecules each of H2A, H2B, H3 and H4 assembled in one H3-H4 heterotetramer and two H2A-H2B heterodimers. The octamer wraps approximately 147 bp of DNA. In terms of processing, monoubiquitination of Lys-121 by the BRE1 gives a specific tag for epigenetic transcriptional activation and is also prerequisite for histone H3 'Lys-4' and 'Lys-79' methylation. Post-translationally, phosphorylated on Ser-15 during apoptosis; which facilitates apoptotic chromatin condensation. GlcNAcylation at Ser-113 promotes monoubiquitination of Lys-121. It fluctuates in response to extracellular glucose, and associates with transcribed genes.

The protein localises to the nucleus. The protein resides in the chromosome. In terms of biological role, core component of nucleosome. Nucleosomes wrap and compact DNA into chromatin, limiting DNA accessibility to the cellular machineries which require DNA as a template. Histones thereby play a central role in transcription regulation, DNA repair, DNA replication and chromosomal stability. DNA accessibility is regulated via a complex set of post-translational modifications of histones, also called histone code, and nucleosome remodeling. The polypeptide is Histone H2B 8 (H2B-VIII) (Gallus gallus (Chicken)).